A 148-amino-acid polypeptide reads, in one-letter code: Flavodoxin (148 aa).

The region spanning 4–145 (VLIVYGSTTG…DVSAWAGRVV (142 aa)) is the Flavodoxin-like domain.

Belongs to the flavodoxin family. The cofactor is FMN.

In terms of biological role, low-potential electron donor to a number of redox enzymes. In Nitratidesulfovibrio vulgaris (strain DSM 19637 / Miyazaki F) (Desulfovibrio vulgaris), this protein is Flavodoxin.